We begin with the raw amino-acid sequence, 142 residues long: Hemoglobin subunit alpha (142 aa).

The 141-residue stretch at 2 to 142 folds into the Globin domain; the sequence is VLSPADKTNV…VSTVLTSKYR (141 aa). Residue serine 4 is modified to Phosphoserine. Lysine 8 is subject to N6-succinyllysine. The residue at position 9 (threonine 9) is a Phosphothreonine. An N6-succinyllysine modification is found at lysine 12. Residue lysine 17 is modified to N6-acetyllysine; alternate. Position 17 is an N6-succinyllysine; alternate (lysine 17). Phosphotyrosine is present on tyrosine 25. Serine 36 carries the post-translational modification Phosphoserine. Residue lysine 41 is modified to N6-succinyllysine. Serine 50 carries the post-translational modification Phosphoserine. An O2-binding site is contributed by histidine 59. Histidine 88 is a heme b binding site. Residue serine 103 is modified to Phosphoserine. Threonine 109 carries the post-translational modification Phosphothreonine. Serine 125 is modified (phosphoserine). Phosphothreonine is present on residues threonine 135 and threonine 138. Serine 139 carries the post-translational modification Phosphoserine.

This sequence belongs to the globin family. In terms of assembly, heterotetramer of two alpha chains and two beta chains. In terms of tissue distribution, red blood cells.

Its function is as follows. Involved in oxygen transport from the lung to the various peripheral tissues. Functionally, hemopressin acts as an antagonist peptide of the cannabinoid receptor CNR1. Hemopressin-binding efficiently blocks cannabinoid receptor CNR1 and subsequent signaling. The protein is Hemoglobin subunit alpha (HBA) of Ailurus fulgens (Himalayan red panda).